Reading from the N-terminus, the 300-residue chain is ETS homologous factor (300 aa).

In terms of domain architecture, PNT spans Ser-29 to Gly-115. Residues Glu-183 to His-202 are disordered. Basic and acidic residues predominate over residues Pro-185 to Ala-195. The ETS DNA-binding region spans Thr-207 to Gly-289.

This sequence belongs to the ETS family.

Its subcellular location is the nucleus. Transcriptional activator that may play a role in regulating epithelial cell differentiation and proliferation. May act as a repressor for a specific subset of ETS/AP-1-responsive genes, and as a modulator of the nuclear response to mitogen-activated protein kinase signaling cascades. Binds to DNA sequences containing the consensus nucleotide core sequence GGAA. Involved in regulation of TNFRSF10B/DR5 expression through Ets-binding sequences on the TNFRSF10B/DR5 promoter. The chain is ETS homologous factor (EHF) from Pan troglodytes (Chimpanzee).